We begin with the raw amino-acid sequence, 97 residues long: F-actin-capping protein subunit beta (97 aa).

Disordered stretches follow at residues 1 to 27 (RLPPQQIEKSPWSNKYDPPLEDGAMPS) and 43 to 66 (KSGSGTMNLGGSLTRQMEKDETVS). Residues 43-57 (KSGSGTMNLGGSLTR) are compositionally biased toward polar residues. An N6-acetyllysine modification is found at lysine 97.

This sequence belongs to the F-actin-capping protein beta subunit family. As to quaternary structure, component of the F-actin capping complex, composed of a heterodimer of an alpha and a beta subunit. Subunit of dynactin, a multiprotein complex part of a tripartite complex with dynein and a adapter, such as BICDL1, BICD2 or HOOK3. The dynactin complex is built around ACTR1A/ACTB filament and consists of an actin-related filament composed of a shoulder domain, a pointed end and a barbed end. Its length is defined by its flexible shoulder domain. The soulder is composed of 2 DCTN1 subunits, 4 DCTN2 and 2 DCTN3. The 4 DCNT2 (via N-terminus) bind the ACTR1A filament and act as molecular rulers to determine the length. The pointed end is important for binding dynein-dynactin cargo adapters. Consists of 4 subunits: ACTR10, DCNT4, DCTN5 and DCTN6. The barbed end is composed of a CAPZA1:CAPZB heterodimers, which binds ACTR1A/ACTB filament and dynactin and stabilizes dynactin. Interacts with ARHGAP17. Interaction with RCSD1/CAPZIP. Component of the WASH complex, composed of F-actin-capping protein subunit alpha (CAPZA1, CAPZA2 or CAPZA3), F-actin-capping protein subunit beta (CAPZB), WASH (WASHC1, WASH2P, WASH3P, WASH4P, WASH5P or WASH6P), WASHC2 (WASHC2A or WASHC2C), WASHC3, WASHC4 and WASHC5. Interacts with ACTG1. Directly interacts with CRACD; this interaction decreases binding to actin.

It localises to the cytoplasm. The protein resides in the cytoskeleton. The protein localises to the myofibril. Its subcellular location is the sarcomere. Functionally, F-actin-capping proteins bind in a Ca(2+)-independent manner to the fast growing ends of actin filaments (barbed end) thereby blocking the exchange of subunits at these ends. Unlike other capping proteins (such as gelsolin and severin), these proteins do not sever actin filaments. Plays a role in the regulation of cell morphology and cytoskeletal organization. Forms, with CAPZB, the barbed end of the fast growing ends of actin filaments in the dynactin complex and stabilizes dynactin structure. The dynactin multiprotein complex activates the molecular motor dynein for ultra-processive transport along microtubules. The protein is F-actin-capping protein subunit beta of Mesocricetus auratus (Golden hamster).